Consider the following 338-residue polypeptide: MAQELKLGFKASAEQFDPRELVEIAVAAEEHGMDSVAVSDHFQPWRHNGGHAPFSLAWMAAVGERTKRVQIGTSVMTPTFRYNPAVIAQAFASMGCMYPGRIMLGVGTGEALNEYAAGFQGEWPEFKERFARLREAIRLMRELWTGDEVNFDGEYYHTQGAYMYDVPEQPIPVYVAAGGPVVARYAGRAGDGFICTSGKGADLYQEKLIPAVKEGAEKAERDFEAIDRMIEIKISYDPDPQLALENTRFWAPLSLTPEQKHSVNSSTEMERLADELPIEQVAKRWIVASDPDEAVEKVKFYTDCGLNHLVFHAPGHDQRRFLENFEKDLAPRLRKLSV.

Coenzyme F420-(gamma-Glu)n is bound at residue Asp40. The active-site Proton donor is His41. Residues Thr77 and 108–109 each bind coenzyme F420-(gamma-Glu)n; that span reads TG. Catalysis depends on Glu110, which acts as the Proton acceptor. Coenzyme F420-(gamma-Glu)n is bound by residues Asn113, 178 to 179, and 181 to 182; these read GG and VV. Thr196, Lys199, Lys260, and Arg284 together coordinate substrate.

It belongs to the F420-dependent glucose-6-phosphate dehydrogenase family. In terms of assembly, homodimer.

It carries out the reaction oxidized coenzyme F420-(gamma-L-Glu)(n) + D-glucose 6-phosphate + H(+) = 6-phospho-D-glucono-1,5-lactone + reduced coenzyme F420-(gamma-L-Glu)(n). Catalyzes the coenzyme F420-dependent oxidation of glucose 6-phosphate (G6P) to 6-phosphogluconolactone. The protein is F420-dependent glucose-6-phosphate dehydrogenase of Gordonia bronchialis (strain ATCC 25592 / DSM 43247 / BCRC 13721 / JCM 3198 / KCTC 3076 / NBRC 16047 / NCTC 10667) (Rhodococcus bronchialis).